A 118-amino-acid polypeptide reads, in one-letter code: Large ribosomal subunit protein bL19 (118 aa).

This sequence belongs to the bacterial ribosomal protein bL19 family.

In terms of biological role, this protein is located at the 30S-50S ribosomal subunit interface and may play a role in the structure and function of the aminoacyl-tRNA binding site. This chain is Large ribosomal subunit protein bL19, found in Dictyoglomus turgidum (strain DSM 6724 / Z-1310).